The primary structure comprises 510 residues: F-box only protein 15 (510 aa).

Residues M77 to I117 enclose the F-box domain.

In terms of assembly, directly interacts with SKP1 and CUL1.

In terms of biological role, substrate-recognition component of the SCF (SKP1-CUL1-F-box protein)-type E3 ubiquitin ligase complex. The protein is F-box only protein 15 (FBXO15) of Homo sapiens (Human).